Here is a 315-residue protein sequence, read N- to C-terminus: Ribosomal RNA small subunit methyltransferase H (315 aa).

S-adenosyl-L-methionine contacts are provided by residues 33-35 (AGH), Asp-53, Phe-80, Asp-101, and Gln-108.

Belongs to the methyltransferase superfamily. RsmH family.

The protein resides in the cytoplasm. It catalyses the reaction cytidine(1402) in 16S rRNA + S-adenosyl-L-methionine = N(4)-methylcytidine(1402) in 16S rRNA + S-adenosyl-L-homocysteine + H(+). Functionally, specifically methylates the N4 position of cytidine in position 1402 (C1402) of 16S rRNA. This Natranaerobius thermophilus (strain ATCC BAA-1301 / DSM 18059 / JW/NM-WN-LF) protein is Ribosomal RNA small subunit methyltransferase H.